The chain runs to 100 residues: Urease subunit gamma (100 aa).

Belongs to the urease gamma subunit family. In terms of assembly, heterotrimer of UreA (gamma), UreB (beta) and UreC (alpha) subunits. Three heterotrimers associate to form the active enzyme.

It localises to the cytoplasm. It catalyses the reaction urea + 2 H2O + H(+) = hydrogencarbonate + 2 NH4(+). Its pathway is nitrogen metabolism; urea degradation; CO(2) and NH(3) from urea (urease route): step 1/1. This Azoarcus sp. (strain BH72) protein is Urease subunit gamma.